The chain runs to 150 residues: Ribonuclease H (150 aa).

The region spanning 2-143 (PAPILDIFVD…ADELANRAIE (142 aa)) is the RNase H type-1 domain. The Mg(2+) site is built by Asp-11, Glu-49, Asp-71, and Asp-135.

This sequence belongs to the RNase H family. As to quaternary structure, monomer. The cofactor is Mg(2+).

It is found in the cytoplasm. It carries out the reaction Endonucleolytic cleavage to 5'-phosphomonoester.. Functionally, endonuclease that specifically degrades the RNA of RNA-DNA hybrids. In Dichelobacter nodosus (strain VCS1703A), this protein is Ribonuclease H.